Reading from the N-terminus, the 1250-residue chain is Cell adhesion molecule-related/down-regulated by oncogenes (1250 aa).

Residues 1–24 (MHPDLGPLWTLLYVLVILCSSVSS) form the signal peptide. The Extracellular segment spans residues 25–962 (DLAPYFISEP…SPARSSDMLY (938 aa)). 5 consecutive Ig-like C2-type domains span residues 28–113 (PYFI…ATVS), 119–203 (DFDS…LKVE), 224–302 (PALS…KHVT), 309–395 (EHAS…GRLQ), and 404–515 (PVIV…AFLT). A disulfide bond links cysteine 49 and cysteine 96. Asparagine 99, asparagine 179, asparagine 286, asparagine 293, asparagine 341, and asparagine 426 each carry an N-linked (GlcNAc...) asparagine glycan. 2 disulfides stabilise this stretch: cysteine 140–cysteine 190 and cysteine 242–cysteine 289. 2 disulfide bridges follow: cysteine 332–cysteine 379 and cysteine 425–cysteine 499. Residues 524-534 (KAESVTPSEAS) are compositionally biased toward polar residues. Residues 524 to 547 (KAESVTPSEASQNDERDPQDGSES) are disordered. N-linked (GlcNAc...) asparagine glycosylation occurs at asparagine 569. 3 Fibronectin type-III domains span residues 572–673 (VPDA…SKEK), 719–814 (APDR…VAGF), and 822–922 (PITG…TKVK). The N-linked (GlcNAc...) asparagine glycan is linked to asparagine 869. The segment at 929–951 (DYPVKELSTPPSSSGNAGNVGPA) is disordered. A helical transmembrane segment spans residues 963 to 983 (LIVGCVLGVMVLILMVFIALC). Topologically, residues 984-1250 (LWKSRQQSTI…SVVLQQAQET (267 aa)) are cytoplasmic. Disordered stretches follow at residues 1178–1208 (DNISDINSDSTEDTAEFSRGDSSGHSEAEDK) and 1223–1250 (DCGEKTARSPPGPPLDGLSVVLQQAQET). Positions 1193-1208 (EFSRGDSSGHSEAEDK) are enriched in basic and acidic residues.

As to quaternary structure, part of a complex that contains BOC, CDON, NEO1, cadherins and CTNNB1. Interacts with NTN3. Interacts with DHH, IHH and SHH. Post-translationally, N-glycosylated. As to expression, highly expressed in somites and the dorsal lips of the neural tube during embryogenesis. Detected at very low levels in adult tissues.

Its subcellular location is the cell membrane. In terms of biological role, component of a cell-surface receptor complex that mediates cell-cell interactions between muscle precursor cells. Promotes differentiation of myogenic cells. Required for response to NTN3 and activation of NFATC3. This Mus musculus (Mouse) protein is Cell adhesion molecule-related/down-regulated by oncogenes (Cdon).